A 204-amino-acid polypeptide reads, in one-letter code: Ribosomal RNA small subunit methyltransferase G (204 aa).

S-adenosyl-L-methionine contacts are provided by residues glycine 74, leucine 79, 125-126, and arginine 138; that span reads AY.

Belongs to the methyltransferase superfamily. RNA methyltransferase RsmG family.

It localises to the cytoplasm. In terms of biological role, specifically methylates the N7 position of a guanine in 16S rRNA. This chain is Ribosomal RNA small subunit methyltransferase G, found in Brachyspira hyodysenteriae (strain ATCC 49526 / WA1).